A 37-amino-acid polypeptide reads, in one-letter code: Large ribosomal subunit protein bL36 (37 aa).

It belongs to the bacterial ribosomal protein bL36 family.

The chain is Large ribosomal subunit protein bL36 from Shewanella frigidimarina (strain NCIMB 400).